A 282-amino-acid polypeptide reads, in one-letter code: DNA-dependent metalloprotease WSS1 homolog 2 (282 aa).

Residues 1-75 (MELKFSCRGN…CLIRQDKDIV (75 aa)) form the Ubiquitin-like domain. A WLM domain is found at 99-274 (PHTTPKPASI…LLAAAERRKQ (176 aa)). Position 202 (His202) interacts with Zn(2+). The active site involves Glu203. Zn(2+) contacts are provided by His206 and His212. Residues 234-282 (GKPGSYVSDRASYTPQQDNDDEDQKNHRRDLLLAAAERRKQSGSKVQKE) are disordered. Residues 269–282 (AERRKQSGSKVQKE) show a composition bias toward basic and acidic residues.

This sequence belongs to the peptidase M3 family. WSS1-like metalloprotease (WLM) subfamily. The cofactor is Zn(2+).

The protein resides in the cytoplasm. The protein localises to the nucleus. Functionally, metalloendopeptidase that acts selectively on DNA-binding proteins. DNA is needed to bring the protease and substrates together to enable proteolysis. Involved in the repair of toxic DNA-protein cross-links (DPCs) such as covalently trapped topoisomerase 1 (TOP1) adducts on DNA lesions or DPCs induced by reactive compounds such as formaldehyde. The sequence is that of DNA-dependent metalloprotease WSS1 homolog 2 from Schizosaccharomyces pombe (strain 972 / ATCC 24843) (Fission yeast).